A 514-amino-acid chain; its full sequence is Beta-glucosidase 21 (514 aa).

The N-terminal stretch at 1-25 (MERPLHLLLVFLSSPWLLLLQGVSS) is a signal peptide. Residues Gln47 and His147 each coordinate a beta-D-glucoside. Catalysis depends on Glu193, which acts as the Proton donor. Cys212 and Cys220 are joined by a disulfide. 2 N-linked (GlcNAc...) asparagine glycosylation sites follow: Asn219 and Asn224. A beta-D-glucoside-binding residues include Tyr336 and Glu406. The active-site Nucleophile is the Glu406. An N-linked (GlcNAc...) asparagine glycan is attached at Asn407. The a beta-D-glucoside site is built by Trp448 and Phe465. Asn494 is a glycosylation site (N-linked (GlcNAc...) asparagine).

This sequence belongs to the glycosyl hydrolase 1 family.

The catalysed reaction is Hydrolysis of terminal, non-reducing beta-D-glucosyl residues with release of beta-D-glucose.. This Oryza sativa subsp. japonica (Rice) protein is Beta-glucosidase 21 (BGLU21).